Reading from the N-terminus, the 357-residue chain is Histidine biosynthesis bifunctional protein HisB (357 aa).

Positions 1-168 (MSEKVLFIDR…IVFKLTKKHD (168 aa)) are histidinol-phosphatase. The active-site Nucleophile is the D9. Positions 9 and 11 each coordinate Mg(2+). The active-site Proton donor is D11. Zn(2+) is bound by residues C93, H95, C101, and C103. A Mg(2+)-binding site is contributed by D130. The segment at 169–357 (RHAKVVRNTK…KNLPSSKGLL (189 aa)) is imidazoleglycerol-phosphate dehydratase.

In the N-terminal section; belongs to the histidinol-phosphatase family. The protein in the C-terminal section; belongs to the imidazoleglycerol-phosphate dehydratase family. Mg(2+) is required as a cofactor. It depends on Zn(2+) as a cofactor.

Its subcellular location is the cytoplasm. It carries out the reaction D-erythro-1-(imidazol-4-yl)glycerol 3-phosphate = 3-(imidazol-4-yl)-2-oxopropyl phosphate + H2O. It catalyses the reaction L-histidinol phosphate + H2O = L-histidinol + phosphate. Its pathway is amino-acid biosynthesis; L-histidine biosynthesis; L-histidine from 5-phospho-alpha-D-ribose 1-diphosphate: step 6/9. It functions in the pathway amino-acid biosynthesis; L-histidine biosynthesis; L-histidine from 5-phospho-alpha-D-ribose 1-diphosphate: step 8/9. This Buchnera aphidicola subsp. Baizongia pistaciae (strain Bp) protein is Histidine biosynthesis bifunctional protein HisB.